A 1732-amino-acid polypeptide reads, in one-letter code: Serine/threonine-protein kinase MRCK alpha (1732 aa).

The Protein kinase domain occupies phenylalanine 77 to phenylalanine 343. ATP-binding positions include isoleucine 83–valine 91 and lysine 106. The Proton acceptor role is filled by aspartate 201. Phosphoserine; by autocatalysis is present on residues serine 222 and serine 234. Threonine 240 carries the post-translational modification Phosphothreonine; by autocatalysis. The AGC-kinase C-terminal domain maps to serine 344–serine 414. Coiled-coil stretches lie at residues asparagine 437–glutamine 670, serine 713–glutamine 820, and leucine 880–glycine 943. The disordered stretch occupies residues cysteine 973–alanine 1002. The Phorbol-ester/DAG-type zinc-finger motif lies at threonine 1012 to cysteine 1062. Residues glycine 1082–lysine 1201 form the PH domain. Residue serine 1127 is modified to Phosphoserine. In terms of domain architecture, CNH spans isoleucine 1227 to asparagine 1499. The residue at position 1545 (serine 1545) is a Phosphoserine. A CRIB domain is found at isoleucine 1571–glycine 1584. The disordered stretch occupies residues leucine 1592 to proline 1732. The span at serine 1604 to lysine 1619 shows a compositional bias: polar residues. Phosphoserine occurs at positions 1611, 1613, 1629, 1651, 1664, 1669, 1693, 1719, and 1721. The span at glycine 1625–alanine 1640 shows a compositional bias: low complexity. A compositionally biased stretch (low complexity) spans proline 1665–glycine 1674.

This sequence belongs to the protein kinase superfamily. AGC Ser/Thr protein kinase family. DMPK subfamily. Homodimer and homotetramer via the coiled coil regions. Interacts tightly with GTP-bound but not GDP-bound CDC42. Forms a tripartite complex with MYO18A and LURAP1 with the latter acting as an adapter connecting CDC42BPA and MYO18A. LURAP1 binding results in activation of CDC42BPA by abolition of its negative autoregulation. Interacts with LURAP1. Interacts (via AGC-kinase C-terminal domain) with FAM89B/LRAP25 (via LRR repeat). Forms a tripartite complex with FAM89B/LRAP25 and LIMK1. It depends on Mg(2+) as a cofactor. Proteolytically cleaved by caspases upon apoptosis induction. The cleavage at Asp-478 by CASP3 increases its kinase activity (in vitro). In terms of tissue distribution, highly expressed in the brain and lung and present in lower levels in all other tissues tested.

The protein localises to the cytoplasm. The protein resides in the cell projection. It localises to the lamellipodium. The enzyme catalyses L-seryl-[protein] + ATP = O-phospho-L-seryl-[protein] + ADP + H(+). It catalyses the reaction L-threonyl-[protein] + ATP = O-phospho-L-threonyl-[protein] + ADP + H(+). Maintained in an inactive, closed conformation by an interaction between the kinase domain and the negative autoregulatory C-terminal coiled-coil region. Agonist binding to the phorbol ester binding site disrupts this, releasing the kinase domain to allow N-terminus-mediated dimerization and kinase activation by transautophosphorylation. Inhibited by chelerythrine chloride. Serine/threonine-protein kinase which is an important downstream effector of CDC42 and plays a role in the regulation of cytoskeleton reorganization and cell migration. Regulates actin cytoskeletal reorganization via phosphorylation of PPP1R12A and MYL9/MLC2. In concert with MYO18A and LURAP1, is involved in modulating lamellar actomyosin retrograde flow that is crucial to cell protrusion and migration. Phosphorylates: PPP1R12C, LIMK1 and LIMK2. May play a role in TFRC-mediated iron uptake. In concert with FAM89B/LRAP25 mediates the targeting of LIMK1 to the lamellipodium resulting in its activation and subsequent phosphorylation of CFL1 which is important for lamellipodial F-actin regulation. Triggers the formation of an extrusion apical actin ring required for epithelial extrusion of apoptotic cells. This Rattus norvegicus (Rat) protein is Serine/threonine-protein kinase MRCK alpha.